A 150-amino-acid polypeptide reads, in one-letter code: Globin-1 (150 aa).

Residues 11-150 (ALTAAEKATI…MICILLRSSY (140 aa)) form the Globin domain. Residues His74 and His106 each contribute to the heme b site.

Belongs to the globin family. In terms of assembly, monomer.

This is Globin-1 from Petromyzon marinus (Sea lamprey).